The sequence spans 354 residues: Uroporphyrinogen decarboxylase (354 aa).

Residues 30–34 (RQAGR), phenylalanine 49, aspartate 79, tyrosine 156, serine 211, and histidine 326 each bind substrate.

It belongs to the uroporphyrinogen decarboxylase family. As to quaternary structure, homodimer.

Its subcellular location is the cytoplasm. The enzyme catalyses uroporphyrinogen III + 4 H(+) = coproporphyrinogen III + 4 CO2. Its pathway is porphyrin-containing compound metabolism; protoporphyrin-IX biosynthesis; coproporphyrinogen-III from 5-aminolevulinate: step 4/4. Its function is as follows. Catalyzes the decarboxylation of four acetate groups of uroporphyrinogen-III to yield coproporphyrinogen-III. This is Uroporphyrinogen decarboxylase from Salinibacter ruber (strain DSM 13855 / M31).